We begin with the raw amino-acid sequence, 89 residues long: Small ribosomal subunit protein uS15 (89 aa).

It belongs to the universal ribosomal protein uS15 family. Part of the 30S ribosomal subunit. Forms a bridge to the 50S subunit in the 70S ribosome, contacting the 23S rRNA.

In terms of biological role, one of the primary rRNA binding proteins, it binds directly to 16S rRNA where it helps nucleate assembly of the platform of the 30S subunit by binding and bridging several RNA helices of the 16S rRNA. Functionally, forms an intersubunit bridge (bridge B4) with the 23S rRNA of the 50S subunit in the ribosome. In Yersinia pseudotuberculosis serotype O:1b (strain IP 31758), this protein is Small ribosomal subunit protein uS15.